The chain runs to 269 residues: Diaminopimelate epimerase (269 aa).

The substrate site is built by asparagine 15, glutamine 49, and asparagine 66. Residue cysteine 75 is the Proton donor of the active site. Substrate is bound by residues 76 to 77 (GN), asparagine 155, asparagine 187, and 204 to 205 (ER). The active-site Proton acceptor is the cysteine 213. 214–215 (GS) contacts substrate.

This sequence belongs to the diaminopimelate epimerase family. In terms of assembly, homodimer.

The protein localises to the cytoplasm. It catalyses the reaction (2S,6S)-2,6-diaminopimelate = meso-2,6-diaminopimelate. The protein operates within amino-acid biosynthesis; L-lysine biosynthesis via DAP pathway; DL-2,6-diaminopimelate from LL-2,6-diaminopimelate: step 1/1. Catalyzes the stereoinversion of LL-2,6-diaminopimelate (L,L-DAP) to meso-diaminopimelate (meso-DAP), a precursor of L-lysine and an essential component of the bacterial peptidoglycan. In Rickettsia canadensis (strain McKiel), this protein is Diaminopimelate epimerase.